The primary structure comprises 273 residues: Undecaprenyl-diphosphatase (273 aa).

The next 7 helical transmembrane spans lie at 6–26 (SLLV…LPVS), 45–65 (AKTF…VMFW), 90–110 (LTLI…LLFH), 116–136 (LFNP…LIAA), 190–210 (YAAS…ATAL), 222–242 (GDIP…LVAI), and 252–272 (ISFI…YVVF).

Belongs to the UppP family.

Its subcellular location is the cell inner membrane. It carries out the reaction di-trans,octa-cis-undecaprenyl diphosphate + H2O = di-trans,octa-cis-undecaprenyl phosphate + phosphate + H(+). Its function is as follows. Catalyzes the dephosphorylation of undecaprenyl diphosphate (UPP). Confers resistance to bacitracin. The protein is Undecaprenyl-diphosphatase of Escherichia fergusonii (strain ATCC 35469 / DSM 13698 / CCUG 18766 / IAM 14443 / JCM 21226 / LMG 7866 / NBRC 102419 / NCTC 12128 / CDC 0568-73).